The following is a 416-amino-acid chain: Vacuole membrane protein KMS2 (416 aa).

Gly-2 is subject to N-acetylglycine. Residues 2-59 lie on the Cytoplasmic side of the membrane; that stretch reads GYGNRASSKTPAISGLREKHQQDLEKLTLTSQPFKTLRLFVVAVFLYVRRWSSYLLAN. The helical transmembrane segment at 60–80 threads the bilayer; that stretch reads VGWLILFCSIFVAFAALLVTL. The Lumenal segment spans residues 81–100; the sequence is DGPHVKHVEELSEYTRFGLW. Residues 101 to 123 traverse the membrane as a helical segment; it reads WIFLGVASSIGLGSGLHTFVLYL. Over 124 to 249 the chain is Cytoplasmic; the sequence is GPHIALFTIK…WLLSHSQYLN (126 aa). The chain crosses the membrane as a helical span at residues 250 to 270; it reads FFTILILASVPNPLFDLAGIM. Over 271–281 the chain is Lumenal; it reads CGQFEKPFWEF. The helical transmembrane segment at 282–304 threads the bilayer; that stretch reads FLATLIGKAIIKTHIQTVFIICV. At 305–315 the chain is on the cytoplasmic side; it reads CNNQLLDWVEN. The helical transmembrane segment at 316-336 threads the bilayer; sequence ELIYILSFVPGFASALPELTA. Over 337–364 the chain is Lumenal; that stretch reads KLRLMKEKYLIASPPVSSDINVKKWDLS. A helical membrane pass occupies residues 365 to 385; sequence FASVWNGVVWLMLLNFFGQIV. The Cytoplasmic segment spans residues 386–416; the sequence is TSTAQRYLKKQQEEELDALTNKSSLTSKKSK.

It belongs to the VMP1 family.

It is found in the endoplasmic reticulum membrane. Involved in the early secretory pathway. Required for the correct export of secretory products from the endoplasmic reticulum (ER) and involved in the maintenance of ER integrity. In Arabidopsis thaliana (Mouse-ear cress), this protein is Vacuole membrane protein KMS2.